A 685-amino-acid polypeptide reads, in one-letter code: Polyphosphate kinase (685 aa).

Asparagine 45 is an ATP binding site. The Mg(2+) site is built by arginine 372 and arginine 402. One can recognise a PLD phosphodiesterase 1 domain in the interval 427 to 461 (PGLKIHAKLFLISRKEGDDVVRYAHIGTGNFNEKT). Histidine 432 serves as the catalytic Phosphohistidine intermediate. ATP is bound by residues tyrosine 465, arginine 561, and histidine 589. One can recognise a PLD phosphodiesterase 2 domain in the interval 584-614 (DRYLEHDRIYIFDNAGDKQVYLSSADWMTRN).

Belongs to the polyphosphate kinase 1 (PPK1) family. The cofactor is Mg(2+). Post-translationally, an intermediate of this reaction is the autophosphorylated ppk in which a phosphate is covalently linked to a histidine residue through a N-P bond.

The enzyme catalyses [phosphate](n) + ATP = [phosphate](n+1) + ADP. In terms of biological role, catalyzes the reversible transfer of the terminal phosphate of ATP to form a long-chain polyphosphate (polyP). The protein is Polyphosphate kinase of Klebsiella pneumoniae.